Consider the following 208-residue polypeptide: Thymidylate kinase (208 aa).

G10–T17 is an ATP binding site.

The protein belongs to the thymidylate kinase family.

It carries out the reaction dTMP + ATP = dTDP + ADP. Phosphorylation of dTMP to form dTDP in both de novo and salvage pathways of dTTP synthesis. The protein is Thymidylate kinase of Actinobacillus pleuropneumoniae serotype 5b (strain L20).